The primary structure comprises 309 residues: Protein FdhE (309 aa).

It belongs to the FdhE family.

It is found in the cytoplasm. Its function is as follows. Necessary for formate dehydrogenase activity. This Salmonella choleraesuis (strain SC-B67) protein is Protein FdhE.